Here is a 244-residue protein sequence, read N- to C-terminus: Gas vesicle protein F (244 aa).

It belongs to the gas vesicle GvpF/GvpL family. Binds GvpA.

It localises to the gas vesicle. Functionally, a minor component of the gas vesicle, may be involved in preventing GvpA aggregation during gas vesicle nucleation. Gas vesicles (GV) are hollow, gas filled proteinaceous nanostructures. During planktonic growth they allow positioning of the organism at a favorable depth for light or nutrient acquisition. Its function is as follows. Cluster expression in E.coli (gvpA1-gvpA2-gvpC-gvpN-gvpJ-gvpK-gvpF-gvpG-gvpV-gvpW) allows cells to float and produces irregularly shaped gas vesicles. The protein is Gas vesicle protein F of Nostoc sp. (strain PCC 7120 / SAG 25.82 / UTEX 2576).